The primary structure comprises 71 residues: Small ribosomal subunit protein bS21 (71 aa).

Residues E48–R59 show a composition bias toward basic residues. The interval E48–Y71 is disordered. Residues N60 to Y71 show a composition bias toward basic and acidic residues.

The protein belongs to the bacterial ribosomal protein bS21 family.

This is Small ribosomal subunit protein bS21 from Actinobacillus pleuropneumoniae serotype 5b (strain L20).